A 331-amino-acid chain; its full sequence is Olfactory receptor 6B3 (331 aa).

At 1–25 (MSGENVTRVGTFILVGFPTAPGLQY) the chain is on the extracellular side. An N-linked (GlcNAc...) asparagine glycan is attached at N5. Residues 26–46 (LLFLLFLLTYLFVLVENLAII) traverse the membrane as a helical segment. Topologically, residues 47-54 (LTVWSSTS) are cytoplasmic. Residues 55-75 (LHRPMYYFLSSMSFLEIWYVS) form a helical membrane-spanning segment. The Extracellular portion of the chain corresponds to 76 to 99 (DITPKMLEGFLLQQKRISFVGCMT). C97 and C189 are oxidised to a cystine. Residues 100–120 (QLYFFSSLVCTECVLLASMAY) form a helical membrane-spanning segment. Residues 121 to 139 (DRYVAICHPLRYHVLVTPG) are Cytoplasmic-facing. Residues 140 to 160 (LCLQLVGFSFVSGFTISMIKV) form a helical membrane-spanning segment. The Extracellular portion of the chain corresponds to 161 to 196 (CFISSVTFCGSNVLNHFFCDISPILKLACTDFSTAE). The chain crosses the membrane as a helical span at residues 197 to 217 (LVDFILAFIILVFPLLATMLS). Topologically, residues 218–237 (YAHITLAVLRIPSATGCWRA) are cytoplasmic. The chain crosses the membrane as a helical span at residues 238–258 (FFTCASHLTVVTVFYTALLFM). The Extracellular portion of the chain corresponds to 259–271 (YVRPQAIDSRSSN). Residues 272–292 (KLISVLYTVITPILNPLIYCL) traverse the membrane as a helical segment. The Cytoplasmic segment spans residues 293 to 331 (RNKEFKNALKKAFGLTSCAVEGRLSSLLELHLQIHSQPL).

Belongs to the G-protein coupled receptor 1 family.

It localises to the cell membrane. Its function is as follows. Odorant receptor. The polypeptide is Olfactory receptor 6B3 (OR6B3) (Homo sapiens (Human)).